A 229-amino-acid polypeptide reads, in one-letter code: Clathrin light chain B (229 aa).

Positions 1-17 are enriched in low complexity; it reads MADDFGFFSSSESGAPE. Positions 1–82 are disordered; the sequence is MADDFGFFSS…NGDVFQEANG (82 aa). S11 and S13 each carry phosphoserine. A compositionally biased stretch (polar residues) spans 58–73; the sequence is GPTSGAGSEDMGTTVN. Residues 93 to 155 are involved in binding clathrin heavy chain; sequence ADRLTQEPES…QVEKNKINNR (63 aa). The residue at position 187 (T187) is a Phosphothreonine. An intrachain disulfide couples C199 to C209. An N6-acetyllysine modification is found at K204. S217 carries the phosphoserine modification.

The protein belongs to the clathrin light chain family. Clathrin coats are formed from molecules containing 3 heavy chains and 3 light chains. Interacts (via N-terminus) with HIP1. Interacts with HIP1R.

The protein resides in the cytoplasmic vesicle membrane. It is found in the membrane. The protein localises to the coated pit. Functionally, clathrin is the major protein of the polyhedral coat of coated pits and vesicles. The sequence is that of Clathrin light chain B (CLTB) from Homo sapiens (Human).